A 41-amino-acid polypeptide reads, in one-letter code: Large ribosomal subunit protein bL36 (41 aa).

Belongs to the bacterial ribosomal protein bL36 family.

The sequence is that of Large ribosomal subunit protein bL36 from Jannaschia sp. (strain CCS1).